Here is a 249-residue protein sequence, read N- to C-terminus: Aquaporin TIP2-1 (249 aa).

Helical transmembrane passes span 20–40 (AYVA…GSAI) and 54–74 (AGLV…VSVA). The NPA 1 signature appears at 83 to 85 (NPA). Transmembrane regions (helical) follow at residues 102 to 122 (VFYW…LGFV), 141 to 161 (GVVF…ATAA), and 168 to 188 (LGTI…LAAG). The NPA 2 signature appears at 196–198 (NPA). The helical transmembrane segment at 217 to 237 (WVGPLVGGGLAGLVYGDVFIG) threads the bilayer.

Belongs to the MIP/aquaporin (TC 1.A.8) family. TIP (TC 1.A.8.10) subfamily.

It localises to the vacuole membrane. Aquaporins facilitate the transport of water and small neutral solutes across cell membranes. In Zea mays (Maize), this protein is Aquaporin TIP2-1 (TIP2-1).